Here is a 282-residue protein sequence, read N- to C-terminus: NADPH-dependent 7-cyano-7-deazaguanine reductase (282 aa).

88–90 provides a ligand contact to substrate; the sequence is IES. 90-91 lines the NADPH pocket; it reads SK. Residue Cys190 is the Thioimide intermediate of the active site. The active-site Proton donor is Asp197. 229-230 contacts substrate; sequence HE. Residue 258–259 coordinates NADPH; that stretch reads RG.

This sequence belongs to the GTP cyclohydrolase I family. QueF type 2 subfamily. Homodimer.

It localises to the cytoplasm. It catalyses the reaction 7-aminomethyl-7-carbaguanine + 2 NADP(+) = 7-cyano-7-deazaguanine + 2 NADPH + 3 H(+). It functions in the pathway tRNA modification; tRNA-queuosine biosynthesis. Functionally, catalyzes the NADPH-dependent reduction of 7-cyano-7-deazaguanine (preQ0) to 7-aminomethyl-7-deazaguanine (preQ1). The sequence is that of NADPH-dependent 7-cyano-7-deazaguanine reductase from Pectobacterium carotovorum subsp. carotovorum (strain PC1).